The following is a 496-amino-acid chain: Glycerol kinase (496 aa).

Thr-12 is an ADP binding site. Positions 12, 13, and 14 each coordinate ATP. Thr-12 is a binding site for sn-glycerol 3-phosphate. ADP is bound at residue Arg-16. Residues Arg-82, Glu-83, and Tyr-134 each coordinate sn-glycerol 3-phosphate. The glycerol site is built by Arg-82, Glu-83, and Tyr-134. His-230 bears the Phosphohistidine; by HPr mark. Position 244 (Asp-244) interacts with sn-glycerol 3-phosphate. 2 residues coordinate glycerol: Asp-244 and Gln-245. Thr-266 and Gly-309 together coordinate ADP. The ATP site is built by Thr-266, Gly-309, Gln-313, and Gly-410. Residues Gly-410 and Asn-414 each coordinate ADP.

The protein belongs to the FGGY kinase family. In terms of processing, the phosphoenolpyruvate-dependent sugar phosphotransferase system (PTS), including enzyme I, and histidine-containing protein (HPr) are required for the phosphorylation of, which leads to the activation of the enzyme.

The enzyme catalyses glycerol + ATP = sn-glycerol 3-phosphate + ADP + H(+). The protein operates within polyol metabolism; glycerol degradation via glycerol kinase pathway; sn-glycerol 3-phosphate from glycerol: step 1/1. Its activity is regulated as follows. Inhibited by fructose 1,6-bisphosphate and p-chloromercuribenzoate (PCMB). Functionally, key enzyme in the regulation of glycerol uptake and metabolism. Catalyzes the phosphorylation of glycerol to yield sn-glycerol 3-phosphate. In Thermus thermophilus, this protein is Glycerol kinase.